The sequence spans 146 residues: Calmodulin-like protein 5 (146 aa).

Position 2 is an N-acetylalanine (Ala2). 4 consecutive EF-hand domains span residues 8-43 (EEEA…TGKN), 44-74 (LSEA…TAAK), 78-113 (AGLE…LGQP), and 114-146 (LPQE…LAQE). Ca(2+) contacts are provided by Asp21, Asp23, Asn25, Thr27, Glu32, Asp57, Asp59, Asp61, Glu63, Glu68, Asp91, Asp93, Asp95, His97, Glu102, Asp127, Asp129, Asp131, Arg133, and Glu138.

In terms of assembly, associates with transglutaminase 3. Particularly abundant in the epidermis where its expression is directly related to keratinocyte differentiation. Very low expression in lung.

Binds calcium. May be involved in terminal differentiation of keratinocytes. This Homo sapiens (Human) protein is Calmodulin-like protein 5 (CALML5).